We begin with the raw amino-acid sequence, 274 residues long: Bis(5'-nucleosyl)-tetraphosphatase, symmetrical (274 aa).

The protein belongs to the Ap4A hydrolase family.

It catalyses the reaction P(1),P(4)-bis(5'-adenosyl) tetraphosphate + H2O = 2 ADP + 2 H(+). Hydrolyzes diadenosine 5',5'''-P1,P4-tetraphosphate to yield ADP. This is Bis(5'-nucleosyl)-tetraphosphatase, symmetrical from Shewanella sp. (strain MR-4).